The sequence spans 104 residues: Large ribosomal subunit protein uL23 (104 aa).

The protein belongs to the universal ribosomal protein uL23 family. In terms of assembly, part of the 50S ribosomal subunit. Contacts protein L29, and trigger factor when it is bound to the ribosome.

Functionally, one of the early assembly proteins it binds 23S rRNA. One of the proteins that surrounds the polypeptide exit tunnel on the outside of the ribosome. Forms the main docking site for trigger factor binding to the ribosome. The sequence is that of Large ribosomal subunit protein uL23 from Polynucleobacter necessarius subsp. necessarius (strain STIR1).